We begin with the raw amino-acid sequence, 307 residues long: Elongation factor Ts (307 aa).

An involved in Mg(2+) ion dislocation from EF-Tu region spans residues 82–85 (TDFV).

This sequence belongs to the EF-Ts family.

It is found in the cytoplasm. Associates with the EF-Tu.GDP complex and induces the exchange of GDP to GTP. It remains bound to the aminoacyl-tRNA.EF-Tu.GTP complex up to the GTP hydrolysis stage on the ribosome. The polypeptide is Elongation factor Ts (Nautilia profundicola (strain ATCC BAA-1463 / DSM 18972 / AmH)).